Reading from the N-terminus, the 473-residue chain is Lipid A galacturonosyltransferase RgtD (473 aa).

The next 10 membrane-spanning stretches (helical) occupy residues 6-26, 68-88, 94-114, 118-138, 160-180, 190-210, 238-258, 271-291, 295-315, and 327-347; these read GLLI…FDAT, AIYW…LVLM, FVGP…PGVA, VFFS…LAYF, FLTK…LLLI, VIIA…WNLQ, FFAA…LWAV, KMLV…ATVA, ANWA…LLYL, and INGI…QLLL.

The protein localises to the cell membrane. It functions in the pathway bacterial outer membrane biogenesis; LPS lipid A biosynthesis. Functionally, involved in the modification of the lipopolysaccharide (LPS) lipid A moiety. Catalyzes the transfer of a galacturonic acid (GalA) residue to the 4'-position of 4'-dephosphorylated lipid A, using dodecaprenyl phosphate-GalA as the donor substrate. Acts before the other GalA transferases RgtA, RgtB and RgtC. In Rhizobium johnstonii (strain DSM 114642 / LMG 32736 / 3841) (Rhizobium leguminosarum bv. viciae), this protein is Lipid A galacturonosyltransferase RgtD.